Reading from the N-terminus, the 339-residue chain is Fructose-1,6-bisphosphatase isozyme 2 (339 aa).

Residues 3–10 (DRSPFETD) are important for interaction with ALDOA. AMP contacts are provided by residues Val18 and 28-32 (TGELT). Residues Asp69 and Glu98 each contribute to the Mg(2+) site. 113–114 (KY) is a binding site for AMP. Mg(2+) is bound by residues Asp119, Leu121, and Asp122. Residue Asp122 participates in substrate binding. Arg141 contributes to the AMP binding site. The Nuclear localization signal motif lies at 204-208 (KKKGK). A substrate-binding site is contributed by 213 to 216 (NEGY). Tyr216 and Tyr219 each carry phosphotyrosine. Substrate-binding positions include 245 to 249 (YVGSM), Tyr265, and Lys275. Residue Glu281 participates in Mg(2+) binding.

It belongs to the FBPase class 1 family. In terms of assembly, homotetramer. Interacts with ALDOA; the interaction blocks inhibition by physiological concentrations of AMP and reduces inhibition by Ca(2+). Interacts with alpha-actinin and F-actin. The cofactor is Mg(2+).

The protein localises to the cell junction. It is found in the cytoplasm. It localises to the nucleus. The protein resides in the myofibril. Its subcellular location is the sarcomere. The protein localises to the z line. It catalyses the reaction beta-D-fructose 1,6-bisphosphate + H2O = beta-D-fructose 6-phosphate + phosphate. It participates in carbohydrate biosynthesis; gluconeogenesis. Its activity is regulated as follows. Subject to complex allosteric regulation. The enzyme can assume an active R-state, or an inactive T-state. Intermediate conformations may exist. AMP acts as an allosteric inhibitor. Fructose 2,6-bisphosphate acts as a competitive inhibitor. Strongly inhibited by Ca(2+). Functionally, catalyzes the hydrolysis of fructose 1,6-bisphosphate to fructose 6-phosphate in the presence of divalent cations and probably participates in glycogen synthesis from carbohydrate precursors, such as lactate. The chain is Fructose-1,6-bisphosphatase isozyme 2 (Fbp2) from Rattus norvegicus (Rat).